The primary structure comprises 302 residues: Haloalkane dehalogenase (302 aa).

The AB hydrolase-1 domain occupies 48–150 (PVLLMHGEPS…AGLVIANTGL (103 aa)). Asp-123 serves as the catalytic Nucleophile. Asp-249 functions as the Proton donor in the catalytic mechanism. The Proton acceptor role is filled by His-278.

It belongs to the haloalkane dehalogenase family. Type 1 subfamily. In terms of assembly, monomer.

It carries out the reaction 1-haloalkane + H2O = a halide anion + a primary alcohol + H(+). Its function is as follows. Catalyzes hydrolytic cleavage of carbon-halogen bonds in halogenated aliphatic compounds, leading to the formation of the corresponding primary alcohols, halide ions and protons. The chain is Haloalkane dehalogenase from Caulobacter sp. (strain K31).